A 163-amino-acid chain; its full sequence is uncharacterized protein (163 aa).

Residues 1–33 (MKTLDKITNYDLFDFADEFLKFVPVFRPNPTVT) lie on the Cytoplasmic side of the membrane. The helical transmembrane segment at 34-54 (CLFGNPLTNLLVNGTGAACFF) threads the bilayer. Residues 55 to 117 (EFCSLALIKV…SLGMALPDDD (63 aa)) lie on the Extracellular side of the membrane. A helical membrane pass occupies residues 118–138 (VLLSITFWFLCNSSFSILFVF). At 139–163 (ELRIFLRTVNNLLVVFLSVLKRNDL) the chain is on the cytoplasmic side.

The protein resides in the membrane. This is an uncharacterized protein from Saccharomyces cerevisiae (strain ATCC 204508 / S288c) (Baker's yeast).